An 879-amino-acid chain; its full sequence is Phosphoenolpyruvate carboxylase (879 aa).

Active-site residues include histidine 138 and lysine 545.

The protein belongs to the PEPCase type 1 family. Mg(2+) serves as cofactor.

The catalysed reaction is oxaloacetate + phosphate = phosphoenolpyruvate + hydrogencarbonate. Functionally, forms oxaloacetate, a four-carbon dicarboxylic acid source for the tricarboxylic acid cycle. This is Phosphoenolpyruvate carboxylase (ppc) from Haemophilus influenzae (strain ATCC 51907 / DSM 11121 / KW20 / Rd).